Consider the following 539-residue polypeptide: Glucans biosynthesis protein D (539 aa).

The segment at residues 1–29 is a signal peptide (tat-type signal); it reads MNRRNLLKASMALAAYGSVSASGLYAARA.

This sequence belongs to the OpgD/OpgG family. Post-translationally, predicted to be exported by the Tat system. The position of the signal peptide cleavage has not been experimentally proven.

It localises to the periplasm. It participates in glycan metabolism; osmoregulated periplasmic glucan (OPG) biosynthesis. Functionally, probably involved in the control of the structural glucose backbone of osmoregulated periplasmic glucans (OPGs). In Pseudomonas savastanoi pv. phaseolicola (strain 1448A / Race 6) (Pseudomonas syringae pv. phaseolicola (strain 1448A / Race 6)), this protein is Glucans biosynthesis protein D.